A 332-amino-acid polypeptide reads, in one-letter code: Ribosomal RNA small subunit methyltransferase H (332 aa).

S-adenosyl-L-methionine-binding positions include 38–40 (GGY), aspartate 56, phenylalanine 83, aspartate 104, and glutamine 111. The segment at 309-332 (TETPFSEDISRPDTHIPRSRRQSA) is disordered.

Belongs to the methyltransferase superfamily. RsmH family.

The protein localises to the cytoplasm. The enzyme catalyses cytidine(1402) in 16S rRNA + S-adenosyl-L-methionine = N(4)-methylcytidine(1402) in 16S rRNA + S-adenosyl-L-homocysteine + H(+). Specifically methylates the N4 position of cytidine in position 1402 (C1402) of 16S rRNA. This chain is Ribosomal RNA small subunit methyltransferase H, found in Zymomonas mobilis subsp. mobilis (strain ATCC 31821 / ZM4 / CP4).